We begin with the raw amino-acid sequence, 200 residues long: Glycerol-3-phosphate acyltransferase (200 aa).

The next 5 helical transmembrane spans lie at 2–22, 51–71, 84–104, 113–133, and 143–163; these read IHLLLVVAAYLLGSLSFAVIV, TAAILTLLGDALKGWVAVVAA, IVLLCALAAFIGHLFPVFFGF, ALGILVALDPWLGLACLATWV, and SLSALVTAVLAPVYAGLLLGW.

The protein belongs to the PlsY family. In terms of assembly, probably interacts with PlsX.

It localises to the cell inner membrane. The catalysed reaction is an acyl phosphate + sn-glycerol 3-phosphate = a 1-acyl-sn-glycero-3-phosphate + phosphate. The protein operates within lipid metabolism; phospholipid metabolism. Functionally, catalyzes the transfer of an acyl group from acyl-phosphate (acyl-PO(4)) to glycerol-3-phosphate (G3P) to form lysophosphatidic acid (LPA). This enzyme utilizes acyl-phosphate as fatty acyl donor, but not acyl-CoA or acyl-ACP. The sequence is that of Glycerol-3-phosphate acyltransferase from Thiobacillus denitrificans (strain ATCC 25259 / T1).